Here is a 192-residue protein sequence, read N- to C-terminus: Cytidylate kinase (192 aa).

12–20 (GLAGSGTTT) contributes to the ATP binding site.

This sequence belongs to the cytidylate kinase family. Type 2 subfamily.

It localises to the cytoplasm. The enzyme catalyses CMP + ATP = CDP + ADP. The catalysed reaction is dCMP + ATP = dCDP + ADP. The polypeptide is Cytidylate kinase (cmk) (Pyrococcus horikoshii (strain ATCC 700860 / DSM 12428 / JCM 9974 / NBRC 100139 / OT-3)).